The primary structure comprises 114 residues: Small ribosomal subunit protein bS6 (114 aa).

The protein belongs to the bacterial ribosomal protein bS6 family.

Its function is as follows. Binds together with bS18 to 16S ribosomal RNA. The sequence is that of Small ribosomal subunit protein bS6 from Bacteroides fragilis (strain YCH46).